The sequence spans 677 residues: Secretogranin-1 (677 aa).

The N-terminal stretch at 1 to 20 (MQPTLLLSLLGAVGLAAVNS) is a signal peptide. A disulfide bridge connects residues C36 and C57. 2 stretches are compositionally biased toward basic and acidic residues: residues 64–100 (SRKD…ESSS) and 118–136 (ADTE…RADE). Positions 64–463 (SRKDVKDKET…DKARRHPQGA (400 aa)) are disordered. Residue T79 is modified to Phosphothreonine. Phosphoserine occurs at positions 93, 99, and 100. Residue S93 is glycosylated (O-linked (Xyl...) (chondroitin sulfate) serine). The segment at 116-120 (TKADT) is O-glycosylated at one site. S130 carries the post-translational modification Phosphoserine; by FAM20C. S149 is subject to Phosphoserine. Composition is skewed to basic and acidic residues over residues 150-162 (EEVK…KSQR), 172-190 (NYQK…HLEE), and 200-236 (NERK…EKSS). Position 183 is a phosphoserine (S183). At S225 the chain carries Phosphoserine; by FAM20C. S239 is a glycosylation site (O-linked (Xyl...) (chondroitin sulfate) serine). Phosphoserine is present on residues S259 and S263. Over residues 262 to 272 (ESEEGEEDATS) the composition is skewed to acidic residues. Basic residues predominate over residues 277-287 (RRTRPRHHHGR). S293, S294, S311, and S335 each carry phosphoserine. Y341 carries the sulfotyrosine modification. Residues 359 to 372 (WERYRGRGSEEYRA) show a composition bias toward basic and acidic residues. Phosphoserine; by FAM20C occurs at positions 367, 377, and 380. Composition is skewed to basic and acidic residues over residues 384–415 (EDKR…EPGK) and 433–455 (DTRE…QMDK). Residue Y401 is modified to Phosphotyrosine. S405 is subject to Phosphoserine. Y474 carries the sulfotyrosine modification. Positions 475-512 (GEEGAPGKWQQQGDLQDTKENREEARFQDKQYSSHHTA) are disordered. Residues 490–503 (QDTKENREEARFQD) are compositionally biased toward basic and acidic residues. A phosphoserine mark is found at S533 and S534. Y566 is modified (sulfotyrosine). S617 bears the Phosphoserine mark. The tract at residues 622–653 (DFYDSEEPVSTHQEAENEKDRADQTVLTEDEK) is disordered. Y624 carries the sulfotyrosine modification. Phosphoserine is present on residues S626 and S631. Over residues 634–653 (QEAENEKDRADQTVLTEDEK) the composition is skewed to basic and acidic residues.

This sequence belongs to the chromogranin/secretogranin protein family. Interacts with ITPR1 in the secretory granules. In terms of processing, extensively processed by limited proteolysis at conserved basic residues. Alternative processing are seen in different tissues. Post-translationally, O-glycosylated. Detected in cerebrospinal fluid and urine (at protein level). Expressed in the adrenal medulla, and in pheochromocytoma. Not expressed in liver.

The protein localises to the secreted. In terms of biological role, secretogranin-1 is a neuroendocrine secretory granule protein, which may be the precursor for other biologically active peptides. The chain is Secretogranin-1 (CHGB) from Homo sapiens (Human).